We begin with the raw amino-acid sequence, 106 residues long: ATP-dependent Clp protease adapter protein ClpS (106 aa).

Belongs to the ClpS family. In terms of assembly, binds to the N-terminal domain of the chaperone ClpA.

Its function is as follows. Involved in the modulation of the specificity of the ClpAP-mediated ATP-dependent protein degradation. The sequence is that of ATP-dependent Clp protease adapter protein ClpS from Enterobacter sp. (strain 638).